Consider the following 147-residue polypeptide: MAKEILNIEDLLKPETLEVAIDGKYLIVPTLSDGFTGTVAGGYAYAVTKKGTDYTVNELIYNQKDNTFKPSDEPIIITDDNEIFFITRTLEDPYNYPVVATEKLKTKDVKEKQVLQAFLAFADDRFKLGVYNVFLADEPFVYGDKTE.

Its subcellular location is the virion. The chain is Virion protein 4 from Enterococcus faecalis (Streptococcus faecalis).